Here is a 330-residue protein sequence, read N- to C-terminus: D-lactate dehydrogenase (330 aa).

Residues 156–157, aspartate 176, 206–207, 233–235, and aspartate 259 contribute to the NAD(+) site; these read RI, VP, and AAR. Arginine 235 is a catalytic residue. Glutamate 264 is an active-site residue. The active-site Proton donor is histidine 296.

The protein belongs to the D-isomer specific 2-hydroxyacid dehydrogenase family.

The catalysed reaction is (R)-lactate + NAD(+) = pyruvate + NADH + H(+). In Staphylococcus epidermidis (strain ATCC 35984 / DSM 28319 / BCRC 17069 / CCUG 31568 / BM 3577 / RP62A), this protein is D-lactate dehydrogenase (ldhD).